Reading from the N-terminus, the 487-residue chain is Probable cytochrome P450 513B1 (487 aa).

The helical transmembrane segment at Met1–Phe18 threads the bilayer. Cys433 contacts heme.

It belongs to the cytochrome P450 family. The cofactor is heme.

It localises to the membrane. This is Probable cytochrome P450 513B1 (cyp513B1) from Dictyostelium discoideum (Social amoeba).